The chain runs to 61 residues: Small ribosomal subunit protein uS14 (61 aa).

Zn(2+) is bound by residues Cys-24, Cys-27, Cys-40, and Cys-43.

It belongs to the universal ribosomal protein uS14 family. Zinc-binding uS14 subfamily. In terms of assembly, part of the 30S ribosomal subunit. Contacts proteins S3 and S10. Zn(2+) is required as a cofactor.

In terms of biological role, binds 16S rRNA, required for the assembly of 30S particles and may also be responsible for determining the conformation of the 16S rRNA at the A site. This is Small ribosomal subunit protein uS14 from Clostridium beijerinckii (strain ATCC 51743 / NCIMB 8052) (Clostridium acetobutylicum).